A 289-amino-acid polypeptide reads, in one-letter code: Phosphatidylglycerol--prolipoprotein diacylglyceryl transferase (289 aa).

Transmembrane regions (helical) follow at residues 24–44, 70–90, and 111–131; these read GIAI…VYLL, GGVL…DWFL, and GING…LWLF. Arginine 158 lines the a 1,2-diacyl-sn-glycero-3-phospho-(1'-sn-glycerol) pocket. 2 helical membrane passes run 219 to 239 and 253 to 273; these read GYLS…IEFF and FSMG…ILVW.

This sequence belongs to the Lgt family.

It localises to the cell inner membrane. The catalysed reaction is L-cysteinyl-[prolipoprotein] + a 1,2-diacyl-sn-glycero-3-phospho-(1'-sn-glycerol) = an S-1,2-diacyl-sn-glyceryl-L-cysteinyl-[prolipoprotein] + sn-glycerol 1-phosphate + H(+). It functions in the pathway protein modification; lipoprotein biosynthesis (diacylglyceryl transfer). Functionally, catalyzes the transfer of the diacylglyceryl group from phosphatidylglycerol to the sulfhydryl group of the N-terminal cysteine of a prolipoprotein, the first step in the formation of mature lipoproteins. The polypeptide is Phosphatidylglycerol--prolipoprotein diacylglyceryl transferase (Chlorobaculum tepidum (strain ATCC 49652 / DSM 12025 / NBRC 103806 / TLS) (Chlorobium tepidum)).